The following is a 277-amino-acid chain: Release factor glutamine methyltransferase (277 aa).

S-adenosyl-L-methionine contacts are provided by residues 119–123 (GTGCG), aspartate 142, tryptophan 170, and asparagine 184. 184–187 (NPPY) is a binding site for substrate.

The protein belongs to the protein N5-glutamine methyltransferase family. PrmC subfamily.

The catalysed reaction is L-glutaminyl-[peptide chain release factor] + S-adenosyl-L-methionine = N(5)-methyl-L-glutaminyl-[peptide chain release factor] + S-adenosyl-L-homocysteine + H(+). In terms of biological role, methylates the class 1 translation termination release factors RF1/PrfA and RF2/PrfB on the glutamine residue of the universally conserved GGQ motif. This chain is Release factor glutamine methyltransferase, found in Buchnera aphidicola subsp. Baizongia pistaciae (strain Bp).